The sequence spans 1191 residues: WASH complex subunit homolog 5 (1191 aa).

This sequence belongs to the strumpellin family. In terms of assembly, component of the WASH complex.

Its subcellular location is the early endosome. Acts at least in part as component of the WASH complex which may regulate wash nucleation-promoting factor (NPF) activity and is required for its membrane targeting during endosomal sorting. During embryogenesis, not involved in the wash-dependent developmental migration of hemocytes anteriorly from the tail. This chain is WASH complex subunit homolog 5, found in Drosophila melanogaster (Fruit fly).